The sequence spans 565 residues: Sulfite reductase [NADPH] hemoprotein beta-component (565 aa).

[4Fe-4S] cluster-binding residues include cysteine 429, cysteine 435, cysteine 474, and cysteine 478. Position 478 (cysteine 478) interacts with siroheme.

It belongs to the nitrite and sulfite reductase 4Fe-4S domain family. Alpha(8)-beta(8). The alpha component is a flavoprotein, the beta component is a hemoprotein. The cofactor is siroheme. [4Fe-4S] cluster is required as a cofactor.

The enzyme catalyses hydrogen sulfide + 3 NADP(+) + 3 H2O = sulfite + 3 NADPH + 4 H(+). The protein operates within sulfur metabolism; hydrogen sulfide biosynthesis; hydrogen sulfide from sulfite (NADPH route): step 1/1. Functionally, component of the sulfite reductase complex that catalyzes the 6-electron reduction of sulfite to sulfide. This is one of several activities required for the biosynthesis of L-cysteine from sulfate. The chain is Sulfite reductase [NADPH] hemoprotein beta-component from Shewanella oneidensis (strain ATCC 700550 / JCM 31522 / CIP 106686 / LMG 19005 / NCIMB 14063 / MR-1).